The following is an 87-amino-acid chain: Small ribosomal subunit protein uS19 (87 aa).

Residues M1–K29 are disordered. The span at P9–K28 shows a compositional bias: basic and acidic residues.

Belongs to the universal ribosomal protein uS19 family.

In terms of biological role, protein S19 forms a complex with S13 that binds strongly to the 16S ribosomal RNA. In Protochlamydia amoebophila (strain UWE25), this protein is Small ribosomal subunit protein uS19.